The primary structure comprises 178 residues: Fatty-acid and retinol-binding protein 1 (178 aa).

The signal sequence occupies residues 1–16 (MYHQLILMALIGVIMA). Asn-44 and Asn-75 each carry an N-linked (GlcNAc...) asparagine glycan. Coiled-coil stretches lie at residues 67 to 89 (DAAL…ELRN) and 122 to 154 (QKLD…LKAT). Asn-157 is a glycosylation site (N-linked (GlcNAc...) asparagine).

This sequence belongs to the fatty-acid and retinol-binding protein (FARBP) family. N-glycosylated.

The protein resides in the secreted. In terms of biological role, binds retinol and different fatty acids. This Onchocerca ochengi (Filarial nematode worm) protein is Fatty-acid and retinol-binding protein 1.